The primary structure comprises 259 residues: Type III pantothenate kinase (259 aa).

6–13 (DTGNTNTV) contributes to the ATP binding site. 107 to 110 (GPDR) contributes to the substrate binding site. The active-site Proton acceptor is Asp109. Residue Asp129 participates in K(+) binding. Thr132 contacts ATP. Residue Thr184 coordinates substrate.

This sequence belongs to the type III pantothenate kinase family. Homodimer. NH4(+) serves as cofactor. It depends on K(+) as a cofactor.

Its subcellular location is the cytoplasm. The enzyme catalyses (R)-pantothenate + ATP = (R)-4'-phosphopantothenate + ADP + H(+). Its pathway is cofactor biosynthesis; coenzyme A biosynthesis; CoA from (R)-pantothenate: step 1/5. Catalyzes the phosphorylation of pantothenate (Pan), the first step in CoA biosynthesis. This Paracoccus denitrificans (strain Pd 1222) protein is Type III pantothenate kinase.